We begin with the raw amino-acid sequence, 582 residues long: Aspartate--tRNA ligase (582 aa).

Glu174 provides a ligand contact to L-aspartate. Positions 198-201 (QITK) are aspartate. Arg220 contributes to the L-aspartate binding site. Residues 220–222 (RDE) and Gln229 each bind ATP. His443 contacts L-aspartate. An ATP-binding site is contributed by Glu477. Position 484 (Arg484) interacts with L-aspartate. Position 529–532 (529–532 (GLDR)) interacts with ATP.

It belongs to the class-II aminoacyl-tRNA synthetase family. Type 1 subfamily. As to quaternary structure, homodimer.

It localises to the cytoplasm. It catalyses the reaction tRNA(Asp) + L-aspartate + ATP = L-aspartyl-tRNA(Asp) + AMP + diphosphate. Its function is as follows. Catalyzes the attachment of L-aspartate to tRNA(Asp) in a two-step reaction: L-aspartate is first activated by ATP to form Asp-AMP and then transferred to the acceptor end of tRNA(Asp). In Streptococcus pyogenes serotype M5 (strain Manfredo), this protein is Aspartate--tRNA ligase.